A 349-amino-acid chain; its full sequence is D-alanine--D-alanine ligase (349 aa).

In terms of domain architecture, ATP-grasp spans N140–E345. N169–S224 contributes to the ATP binding site. The Mg(2+) site is built by D300, E312, and N314.

It belongs to the D-alanine--D-alanine ligase family. It depends on Mg(2+) as a cofactor. Mn(2+) serves as cofactor.

It is found in the cytoplasm. It catalyses the reaction 2 D-alanine + ATP = D-alanyl-D-alanine + ADP + phosphate + H(+). Its pathway is cell wall biogenesis; peptidoglycan biosynthesis. Cell wall formation. This Leptospira biflexa serovar Patoc (strain Patoc 1 / Ames) protein is D-alanine--D-alanine ligase.